A 102-amino-acid polypeptide reads, in one-letter code: MSRTENIEHVEESVESELKQPSMYKVILNNDDYTPMDFVIEILQLFFKKDEQQATEIMLAIHHKGKGICGIYPFGIAETKVAQVNQFARQNQHPLLCSLEEA.

Belongs to the ClpS family. Binds to the N-terminal domain of the chaperone ClpA.

In terms of biological role, involved in the modulation of the specificity of the ClpAP-mediated ATP-dependent protein degradation. The sequence is that of ATP-dependent Clp protease adapter protein ClpS from Shewanella pealeana (strain ATCC 700345 / ANG-SQ1).